The following is a 710-amino-acid chain: Mitochondrial intermediate peptidase (710 aa).

The transit peptide at 1-33 (MLLAAGTRYAYRLCGRRAAAALQGRAGRSCARS) directs the protein to the mitochondrion. The residue at position 124 (lysine 124) is an N6-acetyllysine. Residue histidine 492 participates in Zn(2+) binding. Residue glutamate 493 is part of the active site. Residues histidine 496 and histidine 499 each contribute to the Zn(2+) site.

The protein belongs to the peptidase M3 family. Monomer. Zn(2+) is required as a cofactor.

The protein resides in the mitochondrion matrix. The enzyme catalyses Release of an N-terminal octapeptide as second stage of processing of some proteins imported into the mitochondrion.. Activity is divalent cation-dependent. It is stimulated by manganese, magnesium or calcium ions and reversibly inhibited by zinc, cobalt and iron. In terms of biological role, cleaves proteins, imported into the mitochondrion, to their mature size. The polypeptide is Mitochondrial intermediate peptidase (Mipep) (Rattus norvegicus (Rat)).